The following is a 424-amino-acid chain: 3-ketoacyl-CoA thiolase, peroxisomal (424 aa).

Residues 1-26 constitute a peroxisome transit peptide; sequence MQRLQVVLGHLRGPADSGWMPQAAPC. Positions 1–26 are PTS2-type peroxisomal targeting signal; that stretch reads MQRLQVVLGHLRGPADSGWMPQAAPC. 2 positions are modified to phosphothreonine: Thr59 and Thr60. The active-site Acyl-thioester intermediate is Cys123. Catalysis depends on proton acceptor residues His377 and Cys408.

It belongs to the thiolase-like superfamily. Thiolase family. As to quaternary structure, homodimer. Interacts (via PTS2-type peroxisomal targeting signal region) with PEX7; leading to its translocation into peroxisomes.

It localises to the peroxisome. The catalysed reaction is an acyl-CoA + acetyl-CoA = a 3-oxoacyl-CoA + CoA. It carries out the reaction 2 acetyl-CoA = acetoacetyl-CoA + CoA. The enzyme catalyses tetradecanoyl-CoA + acetyl-CoA = 3-oxohexadecanoyl-CoA + CoA. It catalyses the reaction hexanoyl-CoA + acetyl-CoA = 3-oxooctanoyl-CoA + CoA. The catalysed reaction is 3-oxohexadecanedioyl-CoA + CoA = tetradecanedioyl-CoA + acetyl-CoA. It carries out the reaction 3-oxo-(6Z,9Z,12Z,15Z,18Z,21Z)-tetracosahexaenoyl-CoA + CoA = (4Z,7Z,10Z,13Z,16Z,19Z)-docosahexaenoyl-CoA + acetyl-CoA. It participates in lipid metabolism; peroxisomal fatty acid beta-oxidation. Functionally, responsible for the thiolytic cleavage of straight chain 3-keto fatty acyl-CoAs (3-oxoacyl-CoAs). Plays an important role in fatty acid peroxisomal beta-oxidation. Catalyzes the cleavage of short, medium, long, and very long straight chain 3-oxoacyl-CoAs. The polypeptide is 3-ketoacyl-CoA thiolase, peroxisomal (Homo sapiens (Human)).